We begin with the raw amino-acid sequence, 604 residues long: Asparagine synthetase [glutamine-hydrolyzing] 1 (604 aa).

The Nucleophile role is filled by cysteine 2. One can recognise a Glutamine amidotransferase type-2 domain in the interval 2 to 186; that stretch reads CGILAVLGAA…PGHLYSSAAG (185 aa). L-glutamine is bound by residues 50 to 54, 75 to 77, and aspartate 99; these read RLAIV and NGE. Positions 211–451 constitute an Asparagine synthetase domain; the sequence is LREAFEKAVI…LPKHILYRQK (241 aa). Residues leucine 232, valine 268, and 342–343 each bind ATP; that span reads SG.

It carries out the reaction L-aspartate + L-glutamine + ATP + H2O = L-asparagine + L-glutamate + AMP + diphosphate + H(+). It functions in the pathway amino-acid biosynthesis; L-asparagine biosynthesis. In terms of biological role, essential for nitrogen assimilation, distribution and remobilization within the plant via the phloem. The protein is Asparagine synthetase [glutamine-hydrolyzing] 1 of Oryza sativa subsp. japonica (Rice).